A 199-amino-acid polypeptide reads, in one-letter code: Recombination protein RecR (199 aa).

A C4-type zinc finger spans residues Cys-58–Cys-73. In terms of domain architecture, Toprim spans Lys-81–Pro-175.

It belongs to the RecR family.

Functionally, may play a role in DNA repair. It seems to be involved in an RecBC-independent recombinational process of DNA repair. It may act with RecF and RecO. The sequence is that of Recombination protein RecR from Prochlorococcus marinus (strain MIT 9312).